The primary structure comprises 1050 residues: Inositol hexakisphosphate kinase 1 (1050 aa).

4 disordered regions span residues 87–117 (KITRSEATPKSVPEGLQVSEKKNNPDTLSSS), 129–177 (PAIK…IQNV), 269–319 (RQEN…DNEH), and 396–423 (SDLDQENNGKNDTSNENKDIEVNHNNND). S150 is subject to Phosphoserine. Polar residues predominate over residues 156–173 (KQQSHQPQVLHHQTSLKP). The span at 290 to 306 (ESIKEKPNTFEQDKEGE) shows a compositional bias: basic and acidic residues. A compositionally biased stretch (acidic residues) spans 307-316 (QADEEEDEGD). A Phosphoserine modification is found at S396. Basic and acidic residues predominate over residues 402–417 (NNGKNDTSNENKDIEV). Position 469 is a phosphoserine (S469). Low complexity predominate over residues 508-522 (NDSYFSSSSSHNSCS). 2 disordered regions span residues 508–539 (NDSYFSSSSSHNSCSFGERGNTNKLKRRDSGS) and 562–625 (RKRN…PNLQ). 8 positions are modified to phosphoserine: S537, S539, S566, S583, S589, S646, S664, and S670. The span at 566-624 (SNTTTMGNHNARLGSSPSFLTQKSRASSHDASNTSMKTLGDSSSQASLQMDDSKVNPNL) shows a compositional bias: polar residues. 772 to 780 (PCALDLKMG) is a substrate binding site.

It belongs to the inositol phosphokinase (IPK) family.

It localises to the cytoplasm. It carries out the reaction 1D-myo-inositol hexakisphosphate + ATP = 5-diphospho-1D-myo-inositol 1,2,3,4,6-pentakisphosphate + ADP. The enzyme catalyses 1-diphospho-1D-myo-inositol 2,3,4,5,6-pentakisphosphate + ATP + H(+) = 1,5-bis(diphospho)-1D-myo-inositol 2,3,4,6-tetrakisphosphate + ADP. Converts inositol hexakisphosphate (InsP6) to diphosphoinositol pentakisphosphate (InsP7/PP-InsP5). Involved in phosphate regulation and polyphosphate accumulation. Required for resistance to salt stress, cell wall integrity, vacuole morphogenesis, and telomere maintenance. The sequence is that of Inositol hexakisphosphate kinase 1 (KCS1) from Saccharomyces cerevisiae (strain ATCC 204508 / S288c) (Baker's yeast).